A 133-amino-acid polypeptide reads, in one-letter code: Large ribosomal subunit protein bL20 (133 aa).

Belongs to the bacterial ribosomal protein bL20 family.

Functionally, binds directly to 23S ribosomal RNA and is necessary for the in vitro assembly process of the 50S ribosomal subunit. It is not involved in the protein synthesizing functions of that subunit. In Rubrobacter xylanophilus (strain DSM 9941 / JCM 11954 / NBRC 16129 / PRD-1), this protein is Large ribosomal subunit protein bL20.